Consider the following 260-residue polypeptide: tRNA (guanine-N(7)-)-methyltransferase (260 aa).

Residues 1–37 form a disordered region; the sequence is MIHDPNDAGLPDQLPTPSSEAENSPAGDTTPPEEALH. The S-adenosyl-L-methionine site is built by glutamate 90, glutamate 115, aspartate 142, and aspartate 165. Residue aspartate 165 is part of the active site. Substrate-binding positions include lysine 169, aspartate 201, and 236–239; that span reads TKFE.

It belongs to the class I-like SAM-binding methyltransferase superfamily. TrmB family.

The catalysed reaction is guanosine(46) in tRNA + S-adenosyl-L-methionine = N(7)-methylguanosine(46) in tRNA + S-adenosyl-L-homocysteine. The protein operates within tRNA modification; N(7)-methylguanine-tRNA biosynthesis. Its function is as follows. Catalyzes the formation of N(7)-methylguanine at position 46 (m7G46) in tRNA. In Paraburkholderia xenovorans (strain LB400), this protein is tRNA (guanine-N(7)-)-methyltransferase.